The primary structure comprises 953 residues: Protein translocase subunit SecA 1 (953 aa).

ATP contacts are provided by residues Gln-83, 101 to 105 (GEGKT), and Asp-490. Positions 854 to 867 (AAAAAAKASDSAAK) are enriched in low complexity. Positions 854-953 (AAAAAAKASD…DRPAKSHRKG (100 aa)) are disordered. Residues 929–947 (SRRERREAARKQAKADRPA) are compositionally biased toward basic and acidic residues.

The protein belongs to the SecA family. Monomer and homodimer. Part of the essential Sec protein translocation apparatus which comprises SecA, SecYEG and auxiliary proteins SecDF. Other proteins may also be involved.

It localises to the cell membrane. The protein localises to the cytoplasm. The catalysed reaction is ATP + H2O + cellular proteinSide 1 = ADP + phosphate + cellular proteinSide 2.. Its function is as follows. Part of the Sec protein translocase complex. Interacts with the SecYEG preprotein conducting channel. Has a central role in coupling the hydrolysis of ATP to the transfer of proteins into and across the cell membrane, serving as an ATP-driven molecular motor driving the stepwise translocation of polypeptide chains across the membrane. This chain is Protein translocase subunit SecA 1, found in Mycolicibacterium smegmatis (strain ATCC 700084 / mc(2)155) (Mycobacterium smegmatis).